Reading from the N-terminus, the 439-residue chain is Cobyrinate a,c-diamide synthase (439 aa).

A GATase cobBQ-type domain is found at 238–431 (KIAVAYDKAF…AHVNFLGNIE (194 aa)). Cys320 (nucleophile) is an active-site residue.

This sequence belongs to the CobB/CbiA family. Mg(2+) serves as cofactor.

It catalyses the reaction cob(II)yrinate + 2 L-glutamine + 2 ATP + 2 H2O = cob(II)yrinate a,c diamide + 2 L-glutamate + 2 ADP + 2 phosphate + 2 H(+). The protein operates within cofactor biosynthesis; adenosylcobalamin biosynthesis; cob(II)yrinate a,c-diamide from sirohydrochlorin (anaerobic route): step 10/10. Its function is as follows. Catalyzes the ATP-dependent amidation of the two carboxylate groups at positions a and c of cobyrinate, using either L-glutamine or ammonia as the nitrogen source. This is Cobyrinate a,c-diamide synthase from Clostridium tetani (strain Massachusetts / E88).